Consider the following 303-residue polypeptide: 2-dehydropantoate 2-reductase (303 aa).

NADP(+)-binding positions include 7 to 12 (GCGALG), Asn-98, and Ala-122. Residue Asn-98 participates in substrate binding. The active-site Proton donor is the Lys-176. 4 residues coordinate substrate: Asn-180, Asn-184, Asn-194, and Ser-244. Glu-256 contributes to the NADP(+) binding site.

This sequence belongs to the ketopantoate reductase family. In terms of assembly, monomer.

It is found in the cytoplasm. The enzyme catalyses (R)-pantoate + NADP(+) = 2-dehydropantoate + NADPH + H(+). It participates in cofactor biosynthesis; (R)-pantothenate biosynthesis; (R)-pantoate from 3-methyl-2-oxobutanoate: step 2/2. Functionally, catalyzes the NADPH-dependent reduction of ketopantoate into pantoic acid. The sequence is that of 2-dehydropantoate 2-reductase (panE) from Salmonella typhi.